The chain runs to 344 residues: Photosystem II protein D1 (344 aa).

The residue at position 2 (Thr-2) is an N-acetylthreonine. A Phosphothreonine modification is found at Thr-2. 3 helical membrane-spanning segments follow: residues 29–46 (YIGWFGCLMIPTLLTATS), 118–133 (HFFLGICAYMGREWEL), and 142–156 (WIAVAYSAPVAAATA). His-118 contacts chlorophyll a. Tyr-126 serves as a coordination point for pheophytin a. [CaMn4O5] cluster-binding residues include Asp-170 and Glu-189. A helical transmembrane segment spans residues 197 to 218 (FHMLGVAGVFGGSLFSAMHGSL). His-198 contacts chlorophyll a. A quinone-binding positions include His-215 and 264-265 (SF). Fe cation is bound at residue His-215. His-272 contacts Fe cation. Residues 274–288 (FLAAWPVIGIWFTAL) form a helical membrane-spanning segment. [CaMn4O5] cluster is bound by residues His-332, Glu-333, Asp-342, and Ala-344.

The protein belongs to the reaction center PufL/M/PsbA/D family. As to quaternary structure, PSII is composed of 1 copy each of membrane proteins PsbA, PsbB, PsbC, PsbD, PsbE, PsbF, PsbH, PsbI, PsbJ, PsbK, PsbL, PsbM, PsbT, PsbX, PsbY, PsbZ, Psb30/Ycf12, at least 3 peripheral proteins of the oxygen-evolving complex and a large number of cofactors. It forms dimeric complexes. Requires The D1/D2 heterodimer binds P680, chlorophylls that are the primary electron donor of PSII, and subsequent electron acceptors. It shares a non-heme iron and each subunit binds pheophytin, quinone, additional chlorophylls, carotenoids and lipids. D1 provides most of the ligands for the Mn4-Ca-O5 cluster of the oxygen-evolving complex (OEC). There is also a Cl(-1) ion associated with D1 and D2, which is required for oxygen evolution. The PSII complex binds additional chlorophylls, carotenoids and specific lipids. as cofactor. In terms of processing, tyr-161 forms a radical intermediate that is referred to as redox-active TyrZ, YZ or Y-Z.

Its subcellular location is the plastid. The protein resides in the chloroplast thylakoid membrane. It catalyses the reaction 2 a plastoquinone + 4 hnu + 2 H2O = 2 a plastoquinol + O2. Functionally, photosystem II (PSII) is a light-driven water:plastoquinone oxidoreductase that uses light energy to abstract electrons from H(2)O, generating O(2) and a proton gradient subsequently used for ATP formation. It consists of a core antenna complex that captures photons, and an electron transfer chain that converts photonic excitation into a charge separation. The D1/D2 (PsbA/PsbD) reaction center heterodimer binds P680, the primary electron donor of PSII as well as several subsequent electron acceptors. The chain is Photosystem II protein D1 from Pleurastrum terricola (Filamentous green alga).